The following is a 516-amino-acid chain: Bifunctional purine biosynthesis protein PurH (516 aa).

The 146-residue stretch at 1 to 146 folds into the MGS-like domain; sequence MAPFALLSVS…KNHADVAVLT (146 aa).

The protein belongs to the PurH family.

It catalyses the reaction (6R)-10-formyltetrahydrofolate + 5-amino-1-(5-phospho-beta-D-ribosyl)imidazole-4-carboxamide = 5-formamido-1-(5-phospho-D-ribosyl)imidazole-4-carboxamide + (6S)-5,6,7,8-tetrahydrofolate. The catalysed reaction is IMP + H2O = 5-formamido-1-(5-phospho-D-ribosyl)imidazole-4-carboxamide. The protein operates within purine metabolism; IMP biosynthesis via de novo pathway; 5-formamido-1-(5-phospho-D-ribosyl)imidazole-4-carboxamide from 5-amino-1-(5-phospho-D-ribosyl)imidazole-4-carboxamide (10-formyl THF route): step 1/1. It participates in purine metabolism; IMP biosynthesis via de novo pathway; IMP from 5-formamido-1-(5-phospho-D-ribosyl)imidazole-4-carboxamide: step 1/1. This Parasynechococcus marenigrum (strain WH8102) protein is Bifunctional purine biosynthesis protein PurH.